The following is a 457-amino-acid chain: UDP-N-acetylmuramate--L-alanine ligase (457 aa).

Residue 112–118 participates in ATP binding; it reads GAHGKTS.

The protein belongs to the MurCDEF family.

Its subcellular location is the cytoplasm. It catalyses the reaction UDP-N-acetyl-alpha-D-muramate + L-alanine + ATP = UDP-N-acetyl-alpha-D-muramoyl-L-alanine + ADP + phosphate + H(+). It functions in the pathway cell wall biogenesis; peptidoglycan biosynthesis. Functionally, cell wall formation. In Desulfosudis oleivorans (strain DSM 6200 / JCM 39069 / Hxd3) (Desulfococcus oleovorans), this protein is UDP-N-acetylmuramate--L-alanine ligase.